We begin with the raw amino-acid sequence, 202 residues long: Putative chromophore lyase CpcV (202 aa).

The protein belongs to the CpcS/CpeS biliprotein lyase family.

Covalently attaches a chromophore to Cys residue(s) of phycobiliproteins. The polypeptide is Putative chromophore lyase CpcV (cpcV) (Picosynechococcus sp. (strain ATCC 27264 / PCC 7002 / PR-6) (Agmenellum quadruplicatum)).